Reading from the N-terminus, the 480-residue chain is ATP synthase subunit beta (480 aa).

Residue 166–173 (GGAGVGKT) coordinates ATP.

The protein belongs to the ATPase alpha/beta chains family. F-type ATPases have 2 components, CF(1) - the catalytic core - and CF(0) - the membrane proton channel. CF(1) has five subunits: alpha(3), beta(3), gamma(1), delta(1), epsilon(1). CF(0) has three main subunits: a(1), b(2) and c(9-12). The alpha and beta chains form an alternating ring which encloses part of the gamma chain. CF(1) is attached to CF(0) by a central stalk formed by the gamma and epsilon chains, while a peripheral stalk is formed by the delta and b chains.

It localises to the cell membrane. It catalyses the reaction ATP + H2O + 4 H(+)(in) = ADP + phosphate + 5 H(+)(out). In terms of biological role, produces ATP from ADP in the presence of a proton gradient across the membrane. The catalytic sites are hosted primarily by the beta subunits. The chain is ATP synthase subunit beta from Streptomyces griseus subsp. griseus (strain JCM 4626 / CBS 651.72 / NBRC 13350 / KCC S-0626 / ISP 5235).